The sequence spans 178 residues: Gamma-crystallin S (178 aa).

Ser2 bears the N-acetylserine mark. The N-terminal arm stretch occupies residues 2 to 5 (SKSG). 2 Beta/gamma crystallin 'Greek key' domains span residues 6-44 (TKITFYEDKHFQGRHYDCDCDCADFHMYLSRCNSIRVEG) and 45-87 (GTWA…RAVH). A connecting peptide region spans residues 88 to 93 (LSSGGQ). Beta/gamma crystallin 'Greek key' domains lie at 94–134 (YKIQ…KVLD) and 135–177 (GVWI…RRIV).

Belongs to the beta/gamma-crystallin family. In terms of assembly, monomer.

Its function is as follows. Crystallins are the dominant structural components of the vertebrate eye lens. In Canis lupus familiaris (Dog), this protein is Gamma-crystallin S (CRYGS).